A 708-amino-acid polypeptide reads, in one-letter code: Chaperonin-containing T-complex member BBS12 (708 aa).

The protein belongs to the TCP-1 chaperonin family. BBS12 subfamily. In terms of assembly, component of the chaperonin-containing T-complex (TRiC), a heterooligomeric complex of about 850 to 900 kDa that forms two stacked rings, 12 to 16 nm in diameter. Interacts with MKKS.

The protein resides in the cell projection. Its subcellular location is the cilium. Component of the chaperonin-containing T-complex (TRiC), a molecular chaperone complex that assists the folding of proteins upon ATP hydrolysis. As part of the TRiC complex may play a role in the assembly of BBSome, a complex involved in ciliogenesis regulating transports vesicles to the cilia. Involved in adipogenic differentiation. The sequence is that of Chaperonin-containing T-complex member BBS12 (Bbs12) from Mus musculus (Mouse).